The primary structure comprises 199 residues: RNA pyrophosphohydrolase (199 aa).

Residues 6–154 enclose the Nudix hydrolase domain; it reads GYRPNVGIVL…KREVYELALS (149 aa). Residues 38-59 carry the Nudix box motif; sequence GGIQHGESPEQAMYRELHEEVG.

The protein belongs to the Nudix hydrolase family. RppH subfamily. A divalent metal cation serves as cofactor.

Accelerates the degradation of transcripts by removing pyrophosphate from the 5'-end of triphosphorylated RNA, leading to a more labile monophosphorylated state that can stimulate subsequent ribonuclease cleavage. This chain is RNA pyrophosphohydrolase, found in Polynucleobacter asymbioticus (strain DSM 18221 / CIP 109841 / QLW-P1DMWA-1) (Polynucleobacter necessarius subsp. asymbioticus).